A 352-amino-acid chain; its full sequence is Uroporphyrinogen decarboxylase (352 aa).

Residues 29 to 33 (RQAGR), Phe48, Asp78, Tyr154, Ser209, and His322 contribute to the substrate site.

This sequence belongs to the uroporphyrinogen decarboxylase family. In terms of assembly, homodimer.

Its subcellular location is the cytoplasm. The enzyme catalyses uroporphyrinogen III + 4 H(+) = coproporphyrinogen III + 4 CO2. Its pathway is porphyrin-containing compound metabolism; protoporphyrin-IX biosynthesis; coproporphyrinogen-III from 5-aminolevulinate: step 4/4. Its function is as follows. Catalyzes the decarboxylation of four acetate groups of uroporphyrinogen-III to yield coproporphyrinogen-III. The chain is Uroporphyrinogen decarboxylase from Bacillus pumilus (strain SAFR-032).